A 349-amino-acid polypeptide reads, in one-letter code: 4-hydroxy-3-methylbut-2-en-1-yl diphosphate synthase (flavodoxin) (349 aa).

[4Fe-4S] cluster-binding residues include cysteine 264, cysteine 267, cysteine 299, and glutamate 306.

The protein belongs to the IspG family. [4Fe-4S] cluster is required as a cofactor.

The catalysed reaction is (2E)-4-hydroxy-3-methylbut-2-enyl diphosphate + oxidized [flavodoxin] + H2O + 2 H(+) = 2-C-methyl-D-erythritol 2,4-cyclic diphosphate + reduced [flavodoxin]. Its pathway is isoprenoid biosynthesis; isopentenyl diphosphate biosynthesis via DXP pathway; isopentenyl diphosphate from 1-deoxy-D-xylulose 5-phosphate: step 5/6. Converts 2C-methyl-D-erythritol 2,4-cyclodiphosphate (ME-2,4cPP) into 1-hydroxy-2-methyl-2-(E)-butenyl 4-diphosphate. This Clostridium perfringens (strain 13 / Type A) protein is 4-hydroxy-3-methylbut-2-en-1-yl diphosphate synthase (flavodoxin).